The sequence spans 152 residues: Transcription elongation factor Spt5 (152 aa).

The region spanning 99–128 (PGDVVEVISGPFRGTQAQVIRVEEAKGEVV) is the KOW domain.

Belongs to the archaeal Spt5 family. In terms of assembly, heterodimer composed of Spt4 and Spt5. Interacts with RNA polymerase (RNAP).

Its function is as follows. Stimulates transcription elongation. The sequence is that of Transcription elongation factor Spt5 from Saccharolobus solfataricus (strain ATCC 35092 / DSM 1617 / JCM 11322 / P2) (Sulfolobus solfataricus).